The chain runs to 412 residues: Serine hydroxymethyltransferase (412 aa).

(6S)-5,6,7,8-tetrahydrofolate-binding positions include Leu117 and 121–123 (GHL). Lys226 is modified (N6-(pyridoxal phosphate)lysine). (6S)-5,6,7,8-tetrahydrofolate is bound by residues Glu242 and 350 to 352 (SPF).

The protein belongs to the SHMT family. Homodimer. Pyridoxal 5'-phosphate is required as a cofactor.

It is found in the cytoplasm. It carries out the reaction (6R)-5,10-methylene-5,6,7,8-tetrahydrofolate + glycine + H2O = (6S)-5,6,7,8-tetrahydrofolate + L-serine. It functions in the pathway one-carbon metabolism; tetrahydrofolate interconversion. It participates in amino-acid biosynthesis; glycine biosynthesis; glycine from L-serine: step 1/1. In terms of biological role, catalyzes the reversible interconversion of serine and glycine with tetrahydrofolate (THF) serving as the one-carbon carrier. Appears to be specific for THF as the pteridine substrate, since the use of tetrahydromethanopterin (H4MPT) is much less efficient. Also exhibits THF-independent aldolase activity toward beta-hydroxyamino acids, producing glycine and aldehydes, via a retro-aldol mechanism. Thus, is able to catalyze the cleavage of L-allo-threonine and L-threo-beta-phenylserine. The chain is Serine hydroxymethyltransferase from Methanosarcina barkeri (strain Fusaro / DSM 804).